Reading from the N-terminus, the 172-residue chain is 3-hydroxydecanoyl-[acyl-carrier-protein] dehydratase (172 aa).

Histidine 71 is a catalytic residue.

The protein belongs to the thioester dehydratase family. FabA subfamily. As to quaternary structure, homodimer.

The protein localises to the cytoplasm. The enzyme catalyses a (3R)-hydroxyacyl-[ACP] = a (2E)-enoyl-[ACP] + H2O. The catalysed reaction is (3R)-hydroxydecanoyl-[ACP] = (2E)-decenoyl-[ACP] + H2O. It catalyses the reaction (2E)-decenoyl-[ACP] = (3Z)-decenoyl-[ACP]. It functions in the pathway lipid metabolism; fatty acid biosynthesis. In terms of biological role, necessary for the introduction of cis unsaturation into fatty acids. Catalyzes the dehydration of (3R)-3-hydroxydecanoyl-ACP to E-(2)-decenoyl-ACP and then its isomerization to Z-(3)-decenoyl-ACP. Can catalyze the dehydratase reaction for beta-hydroxyacyl-ACPs with saturated chain lengths up to 16:0, being most active on intermediate chain length. This chain is 3-hydroxydecanoyl-[acyl-carrier-protein] dehydratase, found in Escherichia coli O139:H28 (strain E24377A / ETEC).